A 178-amino-acid polypeptide reads, in one-letter code: Large ribosomal subunit protein bL19 (178 aa).

This sequence belongs to the bacterial ribosomal protein bL19 family.

This protein is located at the 30S-50S ribosomal subunit interface and may play a role in the structure and function of the aminoacyl-tRNA binding site. This is Large ribosomal subunit protein bL19 from Rhizobium etli (strain ATCC 51251 / DSM 11541 / JCM 21823 / NBRC 15573 / CFN 42).